A 64-amino-acid polypeptide reads, in one-letter code: Large ribosomal subunit protein bL35 (64 aa).

The protein belongs to the bacterial ribosomal protein bL35 family.

The sequence is that of Large ribosomal subunit protein bL35 from Shewanella halifaxensis (strain HAW-EB4).